A 209-amino-acid polypeptide reads, in one-letter code: MGGKWSKSSIVGWPKIRERIRRTPPTETGVGAVSQDAVSQDLDKCGAAASSSPAANNASCEPPEEEEEVGFPVRPQVPLRPMTYKGAFDLSHFLKEKGGLDGLVWSPKRQEILDLWVYHTQGYFPDWQNYTPGPGIRFPLTFGWCFKLVPMSPEEVEEANEGENNCLLHPISQHGMEDAEREVLKWKFDSSLALRHRAREQHPEYYKDC.

G2 carries the N-myristoyl glycine; by host lipid modification. Residue S6 is modified to Phosphoserine; by host. 2 disordered regions span residues 16 to 35 (IRER…AVSQ) and 43 to 71 (DKCG…EVGF). The segment covering 47-61 (AAASSSPAANNASCE) has biased composition (low complexity). Positions 65–68 (EEEE) are acidic; interacts with host PACS1 and PACS2; stabilizes the interaction of NEF/MHC-I with host AP1M1; necessary for MHC-I internalization. The tract at residues 72 to 81 (PVRPQVPLRP) is SH3-binding; interaction with Src family tyrosine kinases. Positions 75–78 (PQVP) match the PxxP; stabilizes the interaction of NEF/MHC-I with host AP1M1; necessary for MHC-I internalization motif. A mediates dimerization, Nef-PTE1 interaction region spans residues 111-127 (EILDLWVYHTQGYFPDW). Residues 151-183 (MSPEEVEEANEGENNCLLHPISQHGMEDAEREV) are binding to ATP6V1H. Residues 167-168 (LL) carry the Dileucine internalization motif; necessary for CD4 internalization motif. The Diacidic; necessary for CD4 internalization motif lies at 177–178 (ED).

Belongs to the lentivirus primate group Nef protein family. Monomer; cytosolic form. Homodimer; membrane bound form. Interacts with Nef associated p21-activated kinase (PAK2); this interaction activates PAK2. Associates with the Nef-MHC-I-AP1 complex; this complex is required for MHC-I internalization. Interacts (via C-terminus) with host PI3-kinase. Interacts with host PACS1; this interaction seems to be weak. Interacts with host PACS2. Interacts with host LCK and MAPK3; these interactions inhibit the kinase activity of the latter. Interacts with host ATP6V1H; this interaction may play a role in CD4 endocytosis. Associates with the CD4-Nef-AP2 complex; this complex is required for CD4 internalization. Interacts with host AP2 subunit alpha and AP2 subunit sigma2. Interacts with TCR-zeta chain; this interaction up-regulates the Fas ligand (FasL) surface expression. Interacts with host HCK, LYN, and SRC; these interactions activate the Src family kinases. Interacts with MAP3K5; this interaction inhibits the Fas and TNFR-mediated death signals. Interacts with beta-COP and PTE1. Interacts with human RACK1; this increases Nef phosphorylation by PKC. Interacts with TP53; this interaction decreases the half-life of TP53, protecting the infected cell against p53-mediated apoptosis. In terms of processing, the virion-associated Nef proteins are cleaved by the viral protease to release the soluble C-terminal core protein. Nef is probably cleaved concomitantly with viral structural proteins on maturation of virus particles. Post-translationally, myristoylated. Phosphorylated on serine residues, probably by host PKCdelta and theta.

Its subcellular location is the host cell membrane. The protein resides in the virion. It localises to the secreted. The protein localises to the host Golgi apparatus membrane. Its function is as follows. Factor of infectivity and pathogenicity, required for optimal virus replication. Alters numerous pathways of T-lymphocyte function and down-regulates immunity surface molecules in order to evade host defense and increase viral infectivity. Alters the functionality of other immunity cells, like dendritic cells, monocytes/macrophages and NK cells. Functionally, in infected CD4(+) T-lymphocytes, down-regulates the surface MHC-I, mature MHC-II, CD4, CD28, CCR5 and CXCR4 molecules. Mediates internalization and degradation of host CD4 through the interaction of with the cytoplasmic tail of CD4, the recruitment of AP-2 (clathrin adapter protein complex 2), internalization through clathrin coated pits, and subsequent transport to endosomes and lysosomes for degradation. Diverts host MHC-I molecules to the trans-Golgi network-associated endosomal compartments by an endocytic pathway to finally target them for degradation. MHC-I down-regulation may involve AP-1 (clathrin adapter protein complex 1) or possibly Src family kinase-ZAP70/Syk-PI3K cascade recruited by PACS2. In consequence infected cells are masked for immune recognition by cytotoxic T-lymphocytes. Decreasing the number of immune receptors also prevents reinfection by more HIV particles (superinfection). Down-regulates host SERINC3 and SERINC5 thereby excluding these proteins from the viral particles. Virion infectivity is drastically higher when SERINC3 or SERINC5 are excluded from the viral envelope, because these host antiviral proteins impair the membrane fusion event necessary for subsequent virion penetration. In terms of biological role, bypasses host T-cell signaling by inducing a transcriptional program nearly identical to that of anti-CD3 cell activation. Interaction with TCR-zeta chain up-regulates the Fas ligand (FasL). Increasing surface FasL molecules and decreasing surface MHC-I molecules on infected CD4(+) cells send attacking cytotoxic CD8+ T-lymphocytes into apoptosis. Plays a role in optimizing the host cell environment for viral replication without causing cell death by apoptosis. Protects the infected cells from apoptosis in order to keep them alive until the next virus generation is ready to strike. Inhibits the Fas and TNFR-mediated death signals by blocking MAP3K5/ASK1. Decreases the half-life of TP53, protecting the infected cell against p53-mediated apoptosis. Inhibits the apoptotic signals regulated by the Bcl-2 family proteins through the formation of a Nef/PI3-kinase/PAK2 complex that leads to activation of PAK2 and induces phosphorylation of host BAD. Its function is as follows. Extracellular Nef protein targets CD4(+) T-lymphocytes for apoptosis by interacting with CXCR4 surface receptors. The polypeptide is Protein Nef (Human immunodeficiency virus type 1 group M subtype A (isolate MAL) (HIV-1)).